The sequence spans 93 residues: MLRLDLQFFASKKGVGSTKNGRDSEAKRLGAKRADGQFVSGGSILYRQRGTKIYPGENVGRGGDDTLYAKVDGTVKFERFGRNRKKVSVYPVA.

A propeptide spanning residues 1-9 (MLRLDLQFF) is cleaved from the precursor.

Belongs to the bacterial ribosomal protein bL27 family. The N-terminus is cleaved by ribosomal processing cysteine protease Prp.

In Bacillus licheniformis (strain ATCC 14580 / DSM 13 / JCM 2505 / CCUG 7422 / NBRC 12200 / NCIMB 9375 / NCTC 10341 / NRRL NRS-1264 / Gibson 46), this protein is Large ribosomal subunit protein bL27.